The following is a 253-amino-acid chain: Glucosamine-6-phosphate deaminase (253 aa).

Asp65 (proton acceptor; for enolization step) is an active-site residue. Residue Asn133 is the For ring-opening step of the active site. The active-site Proton acceptor; for ring-opening step is His135. Catalysis depends on Glu140, which acts as the For ring-opening step.

This sequence belongs to the glucosamine/galactosamine-6-phosphate isomerase family. NagB subfamily.

The catalysed reaction is alpha-D-glucosamine 6-phosphate + H2O = beta-D-fructose 6-phosphate + NH4(+). It participates in amino-sugar metabolism; N-acetylneuraminate degradation; D-fructose 6-phosphate from N-acetylneuraminate: step 5/5. Functionally, catalyzes the reversible isomerization-deamination of glucosamine 6-phosphate (GlcN6P) to form fructose 6-phosphate (Fru6P) and ammonium ion. This chain is Glucosamine-6-phosphate deaminase, found in Corynebacterium glutamicum (strain R).